Here is a 214-residue protein sequence, read N- to C-terminus: tRNA (guanine-N(7)-)-methyltransferase (214 aa).

The S-adenosyl-L-methionine site is built by E44, E69, D96, and D118. D118 is a catalytic residue. K122 serves as a coordination point for substrate. The interval 124–129 is interaction with RNA; that stretch reads RHEKRR. Residues D154 and 192–195 each bind substrate; that span reads TEYE.

The protein belongs to the class I-like SAM-binding methyltransferase superfamily. TrmB family.

The catalysed reaction is guanosine(46) in tRNA + S-adenosyl-L-methionine = N(7)-methylguanosine(46) in tRNA + S-adenosyl-L-homocysteine. It functions in the pathway tRNA modification; N(7)-methylguanine-tRNA biosynthesis. Catalyzes the formation of N(7)-methylguanine at position 46 (m7G46) in tRNA. This chain is tRNA (guanine-N(7)-)-methyltransferase, found in Lactiplantibacillus plantarum (strain ATCC BAA-793 / NCIMB 8826 / WCFS1) (Lactobacillus plantarum).